The primary structure comprises 559 residues: Membrane protein insertase YidC (559 aa).

6 helical membrane passes run 5–25 (IVNL…WQYF), 332–352 (AIDF…MNFF), 355–375 (YVGN…LLMF), 429–449 (LPIL…YVTI), 474–494 (LFGL…WPIL), and 520–540 (FMPL…LIYW).

It belongs to the OXA1/ALB3/YidC family. Type 1 subfamily. Interacts with the Sec translocase complex via SecD. Specifically interacts with transmembrane segments of nascent integral membrane proteins during membrane integration.

The protein localises to the cell inner membrane. Its function is as follows. Required for the insertion and/or proper folding and/or complex formation of integral membrane proteins into the membrane. Involved in integration of membrane proteins that insert both dependently and independently of the Sec translocase complex, as well as at least some lipoproteins. Aids folding of multispanning membrane proteins. In Rickettsia bellii (strain OSU 85-389), this protein is Membrane protein insertase YidC.